Here is a 570-residue protein sequence, read N- to C-terminus: Sulfite reductase [NADPH] hemoprotein beta-component (570 aa).

Residues cysteine 434, cysteine 440, cysteine 479, and cysteine 483 each contribute to the [4Fe-4S] cluster site. Siroheme is bound at residue cysteine 483.

This sequence belongs to the nitrite and sulfite reductase 4Fe-4S domain family. Alpha(8)-beta(8). The alpha component is a flavoprotein, the beta component is a hemoprotein. Siroheme serves as cofactor. It depends on [4Fe-4S] cluster as a cofactor.

It carries out the reaction hydrogen sulfide + 3 NADP(+) + 3 H2O = sulfite + 3 NADPH + 4 H(+). The protein operates within sulfur metabolism; hydrogen sulfide biosynthesis; hydrogen sulfide from sulfite (NADPH route): step 1/1. Functionally, component of the sulfite reductase complex that catalyzes the 6-electron reduction of sulfite to sulfide. This is one of several activities required for the biosynthesis of L-cysteine from sulfate. The chain is Sulfite reductase [NADPH] hemoprotein beta-component from Salmonella schwarzengrund (strain CVM19633).